Consider the following 215-residue polypeptide: Methylthioribulose-1-phosphate dehydratase (215 aa).

Zn(2+)-binding residues include histidine 103 and histidine 105.

It belongs to the aldolase class II family. MtnB subfamily. It depends on Zn(2+) as a cofactor.

It carries out the reaction 5-(methylsulfanyl)-D-ribulose 1-phosphate = 5-methylsulfanyl-2,3-dioxopentyl phosphate + H2O. The protein operates within amino-acid biosynthesis; L-methionine biosynthesis via salvage pathway; L-methionine from S-methyl-5-thio-alpha-D-ribose 1-phosphate: step 2/6. Catalyzes the dehydration of methylthioribulose-1-phosphate (MTRu-1-P) into 2,3-diketo-5-methylthiopentyl-1-phosphate (DK-MTP-1-P). The protein is Methylthioribulose-1-phosphate dehydratase of Persephonella marina (strain DSM 14350 / EX-H1).